Consider the following 161-residue polypeptide: MSYDLETAERAAYAPFFGYMGAASAQIFTVLGAAYGTAKSAVGICSMGVMRPELIMKSVIPVIMAGIIGIYGLVVAMVLKGKVTSASAGYDLNKGFAHLAAGLTCGLCGLGAGYAIGIVGDAGVRGTAQQPRLFVGMILILIFSEVLGLYGMIVALILGTS.

Topologically, residues 1–15 (MSYDLETAERAAYAP) are lumenal. The chain crosses the membrane as a helical span at residues 16 to 36 (FFGYMGAASAQIFTVLGAAYG). The Cytoplasmic segment spans residues 37-58 (TAKSAVGICSMGVMRPELIMKS). Residues 59 to 79 (VIPVIMAGIIGIYGLVVAMVL) traverse the membrane as a helical segment. The Lumenal segment spans residues 80–98 (KGKVTSASAGYDLNKGFAH). Residues 99 to 119 (LAAGLTCGLCGLGAGYAIGIV) traverse the membrane as a helical segment. Topologically, residues 120–137 (GDAGVRGTAQQPRLFVGM) are cytoplasmic. A helical membrane pass occupies residues 138 to 158 (ILILIFSEVLGLYGMIVALIL). Topologically, residues 159–161 (GTS) are lumenal.

Belongs to the V-ATPase proteolipid subunit family. As to quaternary structure, V-ATPase is a heteromultimeric enzyme made up of two complexes: the ATP-hydrolytic V1 complex and the proton translocation V0 complex. The V1 complex consists of three catalytic AB heterodimers that form a heterohexamer, three peripheral stalks each consisting of EG heterodimers, one central rotor including subunits D and F, and the regulatory subunits C and H. The proton translocation complex V0 consists of the proton transport subunit a, a ring of proteolipid subunits c9c'', rotary subunit d, subunits e and f, and the accessory subunits vah-19/Ac45 and vah-20/PRR. In terms of tissue distribution, expressed in the H-shaped excretory cell, rectum, and a pair of cells posterior to the anus.

It is found in the membrane. Functionally, proton-conducting pore forming subunit of the V0 complex of vacuolar(H+)-ATPase (V-ATPase), a multisubunit enzyme composed of a peripheral complex (V1) that hydrolyzes ATP and a membrane integral complex (V0) that translocates protons. V-ATPase is responsible for acidifying and maintaining the pH of intracellular compartments and in some cell types, is targeted to the plasma membrane, where it is responsible for acidifying the extracellular environment. Involved in necrotic cell death. Required along with other vacuolar ATPase components for the removal of protein aggregates which form in immature oocytes in the distal gonad. This removal occurs as the oocytes mature and move to the proximal gonad, is triggered by the introduction of sperm through mating and occurs before fertilization. The introduction of sperm triggers V-ATPase accumulation in proximal oocytes and induces lysosomal acidification which leads to engulfing of protein aggregates by lysosomes and subsequent clearance of the aggregates. Lysosomal acidification also leads to changes in mitochondrial morphology and function. Mitochondria in distal immature oocytes are fragmented, produce high levels of reactive oxygen species (ROS) and have high membrane potential, indicative of metabolic inactivity. In contrast, mitochondria in proximal mature oocytes are tubular with lower ROS levels and membrane potential, indicative of an active metabolic state required for aggregate mobilization before clearance. This is V-type proton ATPase 16 kDa proteolipid subunit c 2 from Caenorhabditis elegans.